Consider the following 511-residue polypeptide: GMP synthase [glutamine-hydrolyzing] (511 aa).

In terms of domain architecture, Glutamine amidotransferase type-1 spans 5-195 (DILVLDFGSQ…AKYACNCESI (191 aa)). Residue Cys82 is the Nucleophile of the active site. Catalysis depends on residues His169 and Glu171. A GMPS ATP-PPase domain is found at 196–386 (WNMGSFAKTQ…LGLSKEVVYR (191 aa)). 223–229 (SGGVDSS) lines the ATP pocket.

In terms of assembly, homodimer.

The catalysed reaction is XMP + L-glutamine + ATP + H2O = GMP + L-glutamate + AMP + diphosphate + 2 H(+). Its pathway is purine metabolism; GMP biosynthesis; GMP from XMP (L-Gln route): step 1/1. Its function is as follows. Catalyzes the synthesis of GMP from XMP. The polypeptide is GMP synthase [glutamine-hydrolyzing] (guaA) (Campylobacter jejuni subsp. jejuni serotype O:2 (strain ATCC 700819 / NCTC 11168)).